The primary structure comprises 1485 residues: Chromosome partition protein MukB (1485 aa).

34–41 contacts ATP; that stretch reads GGNGAGKS. Coiled coils occupy residues 337–480 and 509–605; these read LNLV…QAYQ and QHLA…PVWL. Residues 666–783 form a flexible hinge region; sequence PSGAEDARLI…EVPLFGRAAR (118 aa). Coiled coils occupy residues 835–915 and 977–1116; these read EAEI…IQQH and GMLT…AKAG.

It belongs to the SMC family. MukB subfamily. Homodimerization via its hinge domain. Binds to DNA via its C-terminal region. Interacts, and probably forms a ternary complex, with MukE and MukF via its C-terminal region. The complex formation is stimulated by calcium or magnesium. Interacts with tubulin-related protein FtsZ.

The protein resides in the cytoplasm. It localises to the nucleoid. Plays a central role in chromosome condensation, segregation and cell cycle progression. Functions as a homodimer, which is essential for chromosome partition. Involved in negative DNA supercoiling in vivo, and by this means organize and compact chromosomes. May achieve or facilitate chromosome segregation by condensation DNA from both sides of a centrally located replisome during cell division. In Yersinia pseudotuberculosis serotype O:3 (strain YPIII), this protein is Chromosome partition protein MukB.